The chain runs to 387 residues: Dual specificity mitogen-activated protein kinase kinase mek-2 (387 aa).

Residues 1-37 (MSSGKRRNPLGLSLPPTVNEQSESGEATAEEATATVP) form a disordered region. Polar residues predominate over residues 16–25 (PTVNEQSESG). The span at 26-35 (EATAEEATAT) shows a compositional bias: low complexity. Positions 73 to 360 (LQTEGELGHG…LKSLTADVFF (288 aa)) constitute a Protein kinase domain. ATP is bound by residues 79–87 (LGHGNGGVV) and Lys-102. The active-site Proton acceptor is the Asp-195. Ser-223 and Ser-227 each carry phosphoserine.

The protein belongs to the protein kinase superfamily. STE Ser/Thr protein kinase family. MAP kinase kinase subfamily. In terms of assembly, interacts with ksr-1.

The catalysed reaction is L-seryl-[protein] + ATP = O-phospho-L-seryl-[protein] + ADP + H(+). It carries out the reaction L-threonyl-[protein] + ATP = O-phospho-L-threonyl-[protein] + ADP + H(+). It catalyses the reaction L-tyrosyl-[protein] + ATP = O-phospho-L-tyrosyl-[protein] + ADP + H(+). With respect to regulation, activated by tyrosine and threonine phosphorylation catalyzed by MAP kinase kinase kinases. Functions in the let-60 Ras signaling pathway; acts downstream of lin-45 raf kinase, but before the sur-1/mpk-1 gene product in controlling vulval cell differentiation. Required for progression of developing oocytes through the pachytene stage. Plays a role in responses to M.nematophilum-mediated bacterial infection by promoting tail swelling and preventing constipation. Involved in fluid homeostasis. Positively regulates lifespan upstream of mpk-1. The protein is Dual specificity mitogen-activated protein kinase kinase mek-2 (mek-2) of Caenorhabditis elegans.